We begin with the raw amino-acid sequence, 110 residues long: Phosphoribosyl-ATP pyrophosphatase (110 aa).

It belongs to the PRA-PH family.

The protein resides in the cytoplasm. It catalyses the reaction 1-(5-phospho-beta-D-ribosyl)-ATP + H2O = 1-(5-phospho-beta-D-ribosyl)-5'-AMP + diphosphate + H(+). It participates in amino-acid biosynthesis; L-histidine biosynthesis; L-histidine from 5-phospho-alpha-D-ribose 1-diphosphate: step 2/9. This chain is Phosphoribosyl-ATP pyrophosphatase, found in Pseudomonas syringae pv. tomato (strain ATCC BAA-871 / DC3000).